Reading from the N-terminus, the 312-residue chain is DNA primase small subunit PriS (312 aa).

Catalysis depends on residues D88, D90, and D215.

The protein belongs to the eukaryotic-type primase small subunit family. Heterodimer of a small subunit (PriS) and a large subunit (PriL). Mg(2+) serves as cofactor. Requires Mn(2+) as cofactor.

Its function is as follows. Catalytic subunit of DNA primase, an RNA polymerase that catalyzes the synthesis of short RNA molecules used as primers for DNA polymerase during DNA replication. The small subunit contains the primase catalytic core and has DNA synthesis activity on its own. Binding to the large subunit stabilizes and modulates the activity, increasing the rate of DNA synthesis while decreasing the length of the DNA fragments, and conferring RNA synthesis capability. The DNA polymerase activity may enable DNA primase to also catalyze primer extension after primer synthesis. May also play a role in DNA repair. The polypeptide is DNA primase small subunit PriS (Pyrobaculum calidifontis (strain DSM 21063 / JCM 11548 / VA1)).